Reading from the N-terminus, the 713-residue chain is Phenylalanine--tRNA ligase beta subunit (713 aa).

Positions 39 to 153 (IRHVENIKYG…EANLNEDPIA (115 aa)) constitute a tRNA-binding domain. One can recognise a B5 domain in the interval 379–454 (LKPKEILFDH…RFYGYDNFPI (76 aa)). Mg(2+) is bound by residues D432, D438, E441, and E442.

This sequence belongs to the phenylalanyl-tRNA synthetase beta subunit family. Type 1 subfamily. In terms of assembly, tetramer of two alpha and two beta subunits. Mg(2+) is required as a cofactor.

The protein localises to the cytoplasm. The catalysed reaction is tRNA(Phe) + L-phenylalanine + ATP = L-phenylalanyl-tRNA(Phe) + AMP + diphosphate + H(+). The chain is Phenylalanine--tRNA ligase beta subunit from Mycoplasma mobile (strain ATCC 43663 / 163K / NCTC 11711) (Mesomycoplasma mobile).